Here is a 793-residue protein sequence, read N- to C-terminus: Calcium permeable stress-gated cation channel 1 (793 aa).

The Lumenal segment spans residues 1 to 21 (MAFNGYGIFDSDPRKNPSSDL). Residues 22–42 (RTQFWLAFLLGASACVFFCFF) form a helical membrane-spanning segment. Residues 43–95 (RKRWKVLYAPRTTIEGLNLPTLSSSYYKWLMDLVNIPDDVVQNCAGLDGYVFL) lie on the Cytoplasmic side of the membrane. Residues 96-116 (LFFKMGIKFLSFASLLGVLII) form a helical membrane-spanning segment. The Lumenal segment spans residues 117-192 (MPVNKHFRGD…IPGLPQPGDG (76 aa)). The chain crosses the membrane as a helical span at residues 193–213 (FLYLYVLFTYFISIFLLYVLF). Over 214 to 444 (SSTKSIADIR…HKFFQGWFIT (231 aa)) the chain is Cytoplasmic. A helical membrane pass occupies residues 445-465 (LVTFMIILLWTVPVGAIAVFI). Over 466 to 493 (NLDTIRRLWPELGRMIEDLPFLNSLLRT) the chain is Lumenal. The helical transmembrane segment at 494 to 514 (FLPTLVYSLFISISPFLFRWL) threads the bilayer. Residues 515-534 (SSMQGLSSRAEEEIYAVGKN) are Cytoplasmic-facing. A helical membrane pass occupies residues 535 to 555 (YAYLFVNFFLVYVIAGSTSIW). The Lumenal portion of the chain corresponds to 556–577 (ELAKDTTSFAHFLANRLPHQAQ). The helical transmembrane segment at 578–598 (FFIDLIVLQGIGMFPLKLIQL) threads the bilayer. The Cytoplasmic segment spans residues 599 to 646 (GKLSSYFVRRSFVPYSIASKKFETPDSFSVGIFLPQPMFIMLICLCYS). Residues 647–667 (IISPLILVFGLIYFIIGFLVY) form a helical membrane-spanning segment. Residues 668–687 (KYELIYQMEHPQHSTGELWS) are Lumenal-facing. The chain crosses the membrane as a helical span at residues 688–708 (TIFLRMIFGCVIMQLTMMGLM). The Cytoplasmic segment spans residues 709–713 (SLRKA). The chain crosses the membrane as a helical span at residues 714–734 (YWLSTVIFPLLCFTVISAYNF). The Lumenal segment spans residues 735 to 793 (STMIRSSMQFVSLYYIRTHQSNTLSSESESRNSESSGSYVHPGFDLSNEELPLIDLNTA). The segment at 759-778 (SSESESRNSESSGSYVHPGF) is disordered.

It belongs to the CSC1 (TC 1.A.17) family.

It is found in the vacuole membrane. In terms of biological role, acts as an osmosensitive calcium-permeable cation channel. The polypeptide is Calcium permeable stress-gated cation channel 1 (Schizosaccharomyces pombe (strain 972 / ATCC 24843) (Fission yeast)).